A 237-amino-acid chain; its full sequence is MERRADAATGKRPIRSFVRREGRLTAGQQRALELLWPAFGLERPPAGQPLDLDRAFGRRAPRILEIGFGNGESLAEQAATHPERDYLGIEVHRPGVGHLLMEVEKRHLGNVRVMMADAAEVLAHHIPDGSLHGVQLFFPDPWPKKRHHKRRLVQPQWVRAVAAKLAPGGFLHLATDWADYAEHMLDVLEAEPDLENTCGPRQFSPRGERPETKFERRGLRKGHQVFDLYYRKREHPG.

4 residues coordinate S-adenosyl-L-methionine: Glu-65, Glu-90, Asp-117, and Asp-140. The active site involves Asp-140. Residues Lys-144, Asp-176, and 212–215 contribute to the substrate site; that span reads TKFE. The segment at 197 to 217 is disordered; sequence TCGPRQFSPRGERPETKFERR. Over residues 206–217 the composition is skewed to basic and acidic residues; sequence RGERPETKFERR.

The protein belongs to the class I-like SAM-binding methyltransferase superfamily. TrmB family.

It catalyses the reaction guanosine(46) in tRNA + S-adenosyl-L-methionine = N(7)-methylguanosine(46) in tRNA + S-adenosyl-L-homocysteine. It functions in the pathway tRNA modification; N(7)-methylguanine-tRNA biosynthesis. Its function is as follows. Catalyzes the formation of N(7)-methylguanine at position 46 (m7G46) in tRNA. The polypeptide is tRNA (guanine-N(7)-)-methyltransferase (Alkalilimnicola ehrlichii (strain ATCC BAA-1101 / DSM 17681 / MLHE-1)).